A 67-amino-acid polypeptide reads, in one-letter code: Neurotoxin Cex9 (67 aa).

The 65-residue stretch at 1 to 65 folds into the LCN-type CS-alpha/beta domain; sequence KDGYPVEVTG…TWPLPNKSCG (65 aa). 4 disulfides stabilise this stretch: Cys11–Cys64, Cys15–Cys40, Cys24–Cys45, and Cys28–Cys47. Cysteine amide is present on Cys64. Residues 65–67 constitute a propeptide that is removed on maturation; sequence GKK.

Belongs to the long (4 C-C) scorpion toxin superfamily. Sodium channel inhibitor family. Beta subfamily. In terms of tissue distribution, expressed by the venom gland.

The protein resides in the secreted. Functionally, beta toxins bind voltage-independently at site-4 of sodium channels (Nav) and shift the voltage of activation toward more negative potentials thereby affecting sodium channel activation and promoting spontaneous and repetitive firing. The chain is Neurotoxin Cex9 from Centruroides exilicauda (Bark scorpion).